A 105-amino-acid polypeptide reads, in one-letter code: Delta-hexatoxin-Mg1a (105 aa).

The first 18 residues, 1-18, serve as a signal peptide directing secretion; that stretch reads MKTLVIACVALVLVVVHG. Residues 19–60 constitute a propeptide that is removed on maturation; it reads EVIEEVNEKQLQESVEEKYSLLQRLEKLDEAITAEENRNSRV. Disulfide bonds link cysteine 63/cysteine 77, cysteine 70/cysteine 82, cysteine 76/cysteine 93, and cysteine 78/cysteine 105.

Belongs to the neurotoxin 06 (delta-actx) family. Expressed by the venom gland.

The protein resides in the secreted. In terms of biological role, selectively slows channel inactivation of mammalian Nav1.1/SCN1A, Nav1.3/SCN3A, and Nav1.6/SCN8A and shows higher affinity for insect Nav1/para channels (site 3). Induces tonic repetitive firing of nerve impulses in insect neurons accompanied by plateau potentials. The protein is Delta-hexatoxin-Mg1a of Macrothele gigas (Japanese funnel web spider).